Here is a 493-residue protein sequence, read N- to C-terminus: Cytochrome P450 monooxygenase olcG (493 aa).

The chain crosses the membrane as a helical span at residues Gly-15–Phe-35. Cys-429 is a binding site for heme.

Belongs to the cytochrome P450 family. Requires heme as cofactor.

It localises to the membrane. It participates in secondary metabolite biosynthesis; terpenoid biosynthesis. Cytochrome P450 monooxygenase; part of the gene cluster that mediates the biosynthesis of 15-deoxyoxalicine B. The first step of the pathway is the synthesis of nicotinyl-CoA from nicotinic acid by the nicotinic acid-CoA ligase olcI. Nicotinyl-CoA is then a substrate of polyketide synthase olcA to produce 4-hydroxy-6-(3-pyridinyl)-2H-pyran-2-one (HPPO) which is further prenylated by the polyprenyl transferase olcH to yield geranylgeranyl-HPPO. Geranylgeranyl pyrophosphate is provided by the cluster-specific geranylgeranyl pyrophosphate synthase olcC. The FAD-dependent monooxygenase olcE catalyzes the epoxidation of geranylgeranyl-HPPO and the terpene cyclase olcD catalyzes the cyclization of the terpenoid component, resulting in the formation of the tricyclic terpene moiety seen in predecaturin E. The cytochrome P450 monooxygenase then catalyzes the allylic oxidation of predecaturin E, which is followed by spirocylization with concomitant loss of one molecule of water to form decaturin E. Decaturin E is the substrate of the cytochrome P450 monooxygenase olcJ which hydroxylates it at the C-29 position to form decaturin F. The short-chain dehydrogenase/reductase olcF may catalyze the oxidation of decaturin F to generate the 29-hydroxyl-27-one intermediate, and subsequent hemiacetal formation probably leads to the formation of decaturin C. The dioxygenase olcK may be a peroxisomal enzyme that catalyzes the hydroxylation of decaturin C into decaturin A once decaturin C is shuttled into the peroxisome by the MFS transporter olcL. Finally the cytochrome P450 monooxygenase olcB catalyzes the oxidative rearrangement to yield 15-deoxyoxalicine B. In the absence of olcJ, decaturin E may be shunted to a pathway in which it is oxidized to a ketone, possibly by olcF, to form decaturin D, which undergoes further allylic oxidation to yield decaturin G. Moreover, in the absence of oclK or oclL, oclB can convert decaturin C into 15-deoxyoxalicine A. This chain is Cytochrome P450 monooxygenase olcG, found in Penicillium canescens.